The chain runs to 2631 residues: MSQKQKPIRFQDYQFTATKDEAYGRSDRYVKQFLNKNLLKKKDGTLGTAEELLTLIQQSNINVVTASTGGAAMGAMLNHTVSTINLTGSGSVPTYNPSDNRNSGSHVITSTNSVISNSSISSTGVINNNINNNSNINSNTGTTTTTISLPNNTEIKTALVSTGSQNASDTAQIDIEFHLSYTQLVTLPPSIFSLIWIQKLVLTHHNIKTLSEDIGKLQQLQVLVLENNRLINLPQSIGDLVNLKRLEVDNNHLVSLCSLERLSKLEVLSVNNNKLTLLPTSIASLSSLKTLNIKSNPIITPPSTVVSKGLKDIVSFLRELETGARPCLRSKLVVLGDPGVGKTSVVQCMKGKKKKTNVTSSSINIGGSSGSEVGIEIDQYDFDVVFDEDDKKRRVITLSTWDIANQDVYFASSQLFDSERSVYIVVFNLNNDDFSAIEYWLHCIMSTSPNSPIVLVGTHIDAFENLNVVNAVLESVASRFQKRFTNIQAIISVSCTTGYDVDKLRQLIEDIIKTQPYLKEKVPSSFFTLEEALIEVKKKRIPPVMMWQEYINLANICNLKDSVQIQRATEFLHNIGSIVYFNDLNSSTVGKMVILDQQWIINCMSSLITSKLLINNCNGIVRQSDLELVWKAPTYPEHLHPALLSIMQAFEICRSLSPSDLVRPEEVNEKEVMGDRNLVPNLLSDNTNIVAQWDDFIDPDTILLNRQYHLPFLPEKFFGKLIIHLMNFTKVESCQKRAVILRNQDNHEALIELKTIKDNKDGTFKKILTVDVRGLVSPVSLLRIVTDTIESLFSQWYKLDIKRYISCYECAILYDRNPTLFTIEECELAVIDGKTVLTCNQKSDSDRVSTSHRLKLDILAPDISMVDIPIPRFNLSEVKINKEVGRGAFGIVYEAEWMSEWIALKKLLLPSSTDTTNLNGNGEVMVYDDPDQLIEDRLRVFREFRHEVYYMSGLNHPNVMKISGFCIQPLCMALEYVRYGSLYSLLSNSSIEISWGLRLQIASEIAKGMQHLHSHNPPVIHRDLKSPNILLNGITEGQNSVATIIDFGTSTALYGGAALIRCVDQPLWLGPEVLAGTAYSEPSDVYSFGIILWELYTRAHPFDEFQFGQWMSKLEDEIIRGLRPTIPPTCPPEYVELIQSCWTHEPNSRPTFTSIVEILGQIKKKFAPLPFTHPPHIRNMMRKSRSSSISEAMLPSNLLHLNLNGINNNNNNSNNNNNSIPVTTISLTSSGTSPTNSPVGGLLSQSLTQPITSGGSTSGILSTSVNRDNSSLVSASSLGNNTSTSSLASLVSNNSGLHHSPSASDGLNDYYGADNNNNNNDSTMDFFQDIFTEEENEQPYPFADDDQQKGILFGFDEEQTNPSASSVSIIIAATMAKMIEMMTKGESSATLKSEHISTRRRSDTAGKNGVPPHWRNSVPLSTNSSTTLDETFIDDFIYVYRSFTTPRNIFKLLVRRFFGPRHTDKVDTFTIKKFEQKKAAIRQGIAVFLRKWVADITELEFRQEEFWLYHNTVAFTKQFIASEFPTIATQIYGTLTTHEDEVNLTNQRFLQIAFSESEIQIDRAMSSMQLTTPKPFRSQKNLANSYNSQSGGGDSSFYYQPSSNDVSRVFLNLATGMRDPLLGITVKEKKFKKDKVSTLCCSGSEIIDWITKCMPIKREEASILVLDMLMKQFFIQISDDGIPISNQKGTNPTFSDSPTSFYMFLEDDPELIARQYTFLELKYLQNIHPRELLGFSVGLVMPNENEKDPEKWRQSNFPHIYDYFRWFNKMTMLVSTEILRQRDIKQRASIIEKYISIALEYLSLWNFNGIMQVLSSLHSEPISRLSATWAKVSQRSMDCFYELSRLMLPESNYLPLRTALASQKPNTIIQASPLYPNISAYMVHTVCPTIPFLGALIADLSQTCTENPTFISSGGEKMINILRVKRLSKKMKMFKEYKEMPTQYLPALTTIPLQYYEHYVNDLKALDSLQIDRLSDIERKLEIICEKNGTTNDDKEKGDENGGGLTSSNFFGNGSDELTERDWTILLTNASVIAYNRGDVVMEENAINTHLYRIKSGAISVEKKDKEGINCKVATMFAPKMFGEMSFLGNKTTARLTVDEESDLYVMDIPFLNNLFNGHPRLGAKFYKIMANQLAIRLKNLPWSKPKNTTGGSSSSNQSAGPDNILGTTPTGISSSGGGLTSLLNQNLSSIMSLSNSNTPPASPRVMTTPTLPSPPAPLQSPPTSGISSPTTTTSTTTDQQKINNTIFQNVHPTINVHRTSSSANLVSPHGRPSNSGFGHSSGGERTINKDPHQRDSGSMDKPILSLGSGGTPRGDGARSGSISYLGRTQTSTSPLNEGLSGGQQPVMKKNDQEFCQRFALVDEIVIKDYPCSLNRSGRLYISQQHVCFYSKFFGYKTKKVIPFKNIDKLICINVNQIELTRLKNTVPSNYRLTFQTGKDREDAFSMIHILWDSSKVSNSSSDEIKNKLAAERKKVNNLTLKTRSNKNKGDELTKEDWELIGCEGSRSSTFKKDEVIIREGERMQKIFQIGKGVCRIEKSVPVAPGSSEMKKVVLGTMKQDDTFGEITYLLNGETTADVIADTDQTEVYTIEGQFVNILFDLNPALASKWFKYLATALNKTLIERESQLYA.

LRR repeat units follow at residues 170 to 194 (TAQI…IFSL), 196 to 217 (WIQK…IGKL), 218 to 240 (QQLQ…IGDL), 242 to 262 (NLKR…LERL), 263 to 285 (SKLE…IASL), and 287 to 308 (SLKT…VVSK). In terms of domain architecture, Roc spans 323–515 (GARPCLRSKL…QLIEDIIKTQ (193 aa)). GTP is bound by residues 336–343 (GDPGVGKT), 402–406 (DIANQ), and 458–461 (THID). The region spanning 523-741 (PSSFFTLEEA…ESCQKRAVIL (219 aa)) is the COR domain. The Protein kinase domain occupies 878–1172 (VKINKEVGRG…KKKFAPLPFT (295 aa)). Residues 884–892 (VGRGAFGIV) and Lys905 contribute to the ATP site. Residue Asp1023 is the Proton acceptor of the active site. Residues 1225-1250 (ISLTSSGTSPTNSPVGGLLSQSLTQP) are compositionally biased toward polar residues. Disordered stretches follow at residues 1225–1263 (ISLT…ILST) and 1387–1418 (SSAT…RNSV). Positions 1251–1263 (ITSGGSTSGILST) are enriched in low complexity. The N-terminal Ras-GEF domain occupies 1366-1539 (SVSIIIAATM…QIYGTLTTHE (174 aa)). The segment covering 1392–1404 (KSEHISTRRRSDT) has biased composition (basic and acidic residues). The DEP domain occupies 1620-1706 (PLLGITVKEK…SPTSFYMFLE (87 aa)). The 264-residue stretch at 1708–1971 (DPELIARQYT…DLKALDSLQI (264 aa)) folds into the Ras-GEF domain. Residues 1989 to 2013 (GTTNDDKEKGDENGGGLTSSNFFGN) are disordered. 2014–2133 (GSDELTERDW…AKFYKIMANQ (120 aa)) is an a nucleoside 3',5'-cyclic phosphate binding site. 3 disordered regions span residues 2142-2180 (PWSK…GGGL), 2192-2239 (MSLS…TTTD), and 2263-2346 (SANL…GQQP). Positions 2144 to 2174 (SKPKNTTGGSSSSNQSAGPDNILGTTPTGIS) are enriched in low complexity. The segment covering 2212-2221 (LPSPPAPLQS) has biased composition (pro residues). Positions 2222–2238 (PPTSGISSPTTTTSTTT) are enriched in low complexity. The segment covering 2287-2299 (TINKDPHQRDSGS) has biased composition (basic and acidic residues). Polar residues predominate over residues 2321–2336 (GSISYLGRTQTSTSPL). The region spanning 2354–2414 (EFCQRFALVD…KNIDKLICIN (61 aa)) is the GRAM domain. Position 2490–2616 (2490–2616 (GDELTKEDWE…ASKWFKYLAT (127 aa))) interacts with a nucleoside 3',5'-cyclic phosphate.

This sequence belongs to the protein kinase superfamily. TKL Ser/Thr protein kinase family. ROCO subfamily.

It catalyses the reaction L-seryl-[protein] + ATP = O-phospho-L-seryl-[protein] + ADP + H(+). The catalysed reaction is L-threonyl-[protein] + ATP = O-phospho-L-threonyl-[protein] + ADP + H(+). In terms of biological role, promotes the exchange of Ras-bound GDP by GTP. Required for cyclic GMP-mediated chemotaxis, polarity. Plays a key role in cyclic AMP-induced myosin II translocation to the cortex. Also involved in the phosphorylation of mlkA and mlcR, either directly or via an intermediate kinase. The sequence is that of Cyclic GMP-binding protein C (gbpC) from Dictyostelium discoideum (Social amoeba).